A 60-amino-acid chain; its full sequence is Large ribosomal subunit protein bL32 (60 aa).

Positions 1 to 25 (MAVQQNKKSPSKRGMHRSHNALNVP) are disordered. The segment covering 9–19 (SPSKRGMHRSH) has biased composition (basic residues).

The protein belongs to the bacterial ribosomal protein bL32 family.

The chain is Large ribosomal subunit protein bL32 from Polaromonas naphthalenivorans (strain CJ2).